A 388-amino-acid chain; its full sequence is Myosin light chain kinase family member 4 (388 aa).

One can recognise a Protein kinase domain in the interval Val106 to Leu361. Residues Leu112–Val120 and Lys135 each bind ATP. The active-site Proton acceptor is Asp227.

It belongs to the protein kinase superfamily. CAMK Ser/Thr protein kinase family.

The catalysed reaction is L-seryl-[protein] + ATP = O-phospho-L-seryl-[protein] + ADP + H(+). The enzyme catalyses L-threonyl-[protein] + ATP = O-phospho-L-threonyl-[protein] + ADP + H(+). This is Myosin light chain kinase family member 4 (MYLK4) from Homo sapiens (Human).